The chain runs to 417 residues: Aromatic-amino-acid aminotransferase 1 (417 aa).

The residue at position 258 (Lys258) is an N6-(pyridoxal phosphate)lysine.

This sequence belongs to the class-I pyridoxal-phosphate-dependent aminotransferase family. As to quaternary structure, homodimer. The cofactor is pyridoxal 5'-phosphate.

It carries out the reaction an aromatic L-alpha-amino acid + 2-oxoglutarate = an aromatic oxo-acid + L-glutamate. Catalyzes the transamination of phenylalanine, tyrosine and tryptophan. Shows virtually no activity towards aspartic acid, alanine, valine or isoleucine. The protein is Aromatic-amino-acid aminotransferase 1 of Thermococcus litoralis (strain ATCC 51850 / DSM 5473 / JCM 8560 / NS-C).